The primary structure comprises 234 residues: MAPQDHASALRPAVGGWAELPFFETHWPRIEAALAQETRQILPPAHQRFAALERTPPESTRVVILGQDPYPTPGHAHGLSFSVEPDVTPLPRSLRNIYQEMRDDLGTCPETGDLRPWAAQGVLLLNTVLSVPAGEANGHKSLGWQELAHQVLDLSSRRPTAYVLWGNQAQKLESHIRPGDHLIVKTAHPSPLSARRGFFGSRVFSAINDWLTARGEPPITWADPRPAQGSIFDV.

The active-site Proton acceptor is D68.

Belongs to the uracil-DNA glycosylase (UDG) superfamily. UNG family.

The protein resides in the cytoplasm. It catalyses the reaction Hydrolyzes single-stranded DNA or mismatched double-stranded DNA and polynucleotides, releasing free uracil.. Functionally, excises uracil residues from the DNA which can arise as a result of misincorporation of dUMP residues by DNA polymerase or due to deamination of cytosine. The sequence is that of Uracil-DNA glycosylase from Ruegeria sp. (strain TM1040) (Silicibacter sp.).